A 291-amino-acid polypeptide reads, in one-letter code: ATP synthase gamma chain (291 aa).

Belongs to the ATPase gamma chain family. F-type ATPases have 2 components, CF(1) - the catalytic core - and CF(0) - the membrane proton channel. CF(1) has five subunits: alpha(3), beta(3), gamma(1), delta(1), epsilon(1). CF(0) has three main subunits: a, b and c.

It is found in the cell membrane. Produces ATP from ADP in the presence of a proton gradient across the membrane. The gamma chain is believed to be important in regulating ATPase activity and the flow of protons through the CF(0) complex. The chain is ATP synthase gamma chain from Streptococcus uberis (strain ATCC BAA-854 / 0140J).